The sequence spans 280 residues: Ribosomal protein L11 methyltransferase (280 aa).

S-adenosyl-L-methionine is bound by residues T131, G152, D174, and N217.

It belongs to the methyltransferase superfamily. PrmA family.

It localises to the cytoplasm. It catalyses the reaction L-lysyl-[protein] + 3 S-adenosyl-L-methionine = N(6),N(6),N(6)-trimethyl-L-lysyl-[protein] + 3 S-adenosyl-L-homocysteine + 3 H(+). Functionally, methylates ribosomal protein L11. The polypeptide is Ribosomal protein L11 methyltransferase (Bacteroides fragilis (strain ATCC 25285 / DSM 2151 / CCUG 4856 / JCM 11019 / LMG 10263 / NCTC 9343 / Onslow / VPI 2553 / EN-2)).